The primary structure comprises 396 residues: Elongation factor Tu (396 aa).

The tr-type G domain maps to 10-206; the sequence is KPHVNIGTIG…AVDESVPDPI (197 aa). Residues 19-26 form a G1 region; that stretch reads GHVDHGKT. 19-26 lines the GTP pocket; the sequence is GHVDHGKT. Residue T26 participates in Mg(2+) binding. Residues 62–66 are G2; it reads GITIN. Residues 83 to 86 form a G3 region; the sequence is DAPG. GTP-binding positions include 83 to 87 and 138 to 141; these read DAPGH and NKSD. Residues 138–141 form a G4 region; that stretch reads NKSD. A G5 region spans residues 176–178; sequence SGL.

It belongs to the TRAFAC class translation factor GTPase superfamily. Classic translation factor GTPase family. EF-Tu/EF-1A subfamily. In terms of assembly, monomer.

It localises to the cytoplasm. The enzyme catalyses GTP + H2O = GDP + phosphate + H(+). Its function is as follows. GTP hydrolase that promotes the GTP-dependent binding of aminoacyl-tRNA to the A-site of ribosomes during protein biosynthesis. This chain is Elongation factor Tu, found in Renibacterium salmoninarum (strain ATCC 33209 / DSM 20767 / JCM 11484 / NBRC 15589 / NCIMB 2235).